A 394-amino-acid polypeptide reads, in one-letter code: MTDIGESESDISTDVSALPMLSHSVSYTSIQKPPFVVSVIGSGNWGTTVAKIIAENTRENPLLFEQKVRMWVYEEEFEGSNLSDIINTEHVNKKYLPGIKLPDNLVAVPDLLEAVQYSNILIFNIPHQHLEKILSQLRGNIDPRARAISCLKGLRVNLDGVELLPDIIQDALGIHCGVLAGANLAQEVAEQRFSETTVGYPLPADYKPGDVDHTVLYTLFHRPYFHVHVIEDIAGISCAGALKNIIAISVGFVEGLEWGDNAKAAMLRRGLLEMIKFGRKFFPGCLVSSFTEESAGVADLFTTCTGGRNFKLAKIMAQTGKSAHEVEKEILNGQSAQGLITAKEIHELIKNKGCEEEFPLFETTYQILFHGVRIGILPYMLENKWSISKPNYSS.

Residues 41–46, K152, and A185 contribute to the NAD(+) site; that span reads GSGNWG. K152 is a binding site for substrate. K243 (proton acceptor) is an active-site residue. NAD(+) is bound by residues R308 and Q337. 308–309 is a binding site for substrate; the sequence is RN.

It belongs to the NAD-dependent glycerol-3-phosphate dehydrogenase family.

It carries out the reaction sn-glycerol 3-phosphate + NAD(+) = dihydroxyacetone phosphate + NADH + H(+). The chain is Glycerol-3-phosphate dehydrogenase [NAD(+)] 2 (gpd2) from Cyberlindnera jadinii (Torula yeast).